The following is a 408-amino-acid chain: GTPase Obg (408 aa).

The Obg domain occupies 1 to 159 (MKFFDEARIE…RNLHLELKVL (159 aa)). The OBG-type G domain occupies 160-334 (ADVGLLGMPN…LIFALQDFLD (175 aa)). GTP-binding positions include 166-173 (GMPNAGKS), 191-195 (FTTLQ), 213-216 (DIPG), 284-287 (NKLD), and 315-317 (SAL). S173 and T193 together coordinate Mg(2+). Residues 385-408 (AEDALAEDALDDDADGEDADPNAR) are disordered.

Belongs to the TRAFAC class OBG-HflX-like GTPase superfamily. OBG GTPase family. As to quaternary structure, monomer. The cofactor is Mg(2+).

The protein localises to the cytoplasm. Its function is as follows. An essential GTPase which binds GTP, GDP and possibly (p)ppGpp with moderate affinity, with high nucleotide exchange rates and a fairly low GTP hydrolysis rate. Plays a role in control of the cell cycle, stress response, ribosome biogenesis and in those bacteria that undergo differentiation, in morphogenesis control. The sequence is that of GTPase Obg from Azoarcus sp. (strain BH72).